A 177-amino-acid chain; its full sequence is tRNA-splicing endonuclease (177 aa).

Active-site residues include Tyr114, His123, and Lys154.

This sequence belongs to the tRNA-intron endonuclease family. Archaeal short subfamily. Homotetramer; although the tetramer contains four active sites, only two participate in the cleavage. Therefore, it should be considered as a dimer of dimers.

The catalysed reaction is pretRNA = a 3'-half-tRNA molecule with a 5'-OH end + a 5'-half-tRNA molecule with a 2',3'-cyclic phosphate end + an intron with a 2',3'-cyclic phosphate and a 5'-hydroxyl terminus.. Its function is as follows. Endonuclease that removes tRNA introns. Cleaves pre-tRNA at the 5'- and 3'-splice sites to release the intron. The products are an intron and two tRNA half-molecules bearing 2',3' cyclic phosphate and 5'-OH termini. Recognizes a pseudosymmetric substrate in which 2 bulged loops of 3 bases are separated by a stem of 4 bp. This chain is tRNA-splicing endonuclease, found in Methanococcus vannielii (strain ATCC 35089 / DSM 1224 / JCM 13029 / OCM 148 / SB).